A 271-amino-acid chain; its full sequence is Aminoglycoside 3'-phosphotransferase (271 aa).

Residue D198 is the Proton acceptor of the active site.

The protein belongs to the aminoglycoside phosphotransferase family.

The catalysed reaction is kanamycin A + ATP = kanamycin 3'-phosphate + ADP + H(+). Resistance to kanamycin and structurally-related aminoglycosides, including amikacin. This is Aminoglycoside 3'-phosphotransferase from Salmonella typhimurium.